The chain runs to 99 residues: Malonate decarboxylase acyl carrier protein (99 aa).

An O-(phosphoribosyl dephospho-coenzyme A)serine modification is found at Ser25.

This sequence belongs to the MdcC family. Post-translationally, covalently binds the prosthetic group of malonate decarboxylase.

Its subcellular location is the cytoplasm. Its function is as follows. Subunit of malonate decarboxylase, it is an acyl carrier protein to which acetyl and malonyl thioester residues are bound via a 2'-(5''-phosphoribosyl)-3'-dephospho-CoA prosthetic group and turn over during the catalytic mechanism. In Pseudomonas putida (strain GB-1), this protein is Malonate decarboxylase acyl carrier protein.